Here is a 371-residue protein sequence, read N- to C-terminus: DNA repair protein RAD14 (371 aa).

Residues 26–48 form a disordered region; it reads LSSDQLNRIESRNEPLKTRPLAV. Basic and acidic residues predominate over residues 32–42; it reads NRIESRNEPLK. Residues Cys191, Cys194, Cys213, and Cys216 each coordinate Zn(2+). A zinc finger lies at 191–216; the sequence is CIECHINIEMDPVLHDVFKLQVCKQC.

It belongs to the XPA family. As to quaternary structure, two monomers bind to kinked/damaged DNA (construct with only the C-terminal DNA-binding domain). Component of the nucleotide excision repair factor 1 (NEF1) complex consisting of RAD1, RAD10 and RAD14.

The protein resides in the nucleus. In terms of biological role, involved in nucleotide excision repair. Binds specifically to damaged DNA. Required for the incision step. The sequence is that of DNA repair protein RAD14 (RAD14) from Saccharomyces cerevisiae (strain ATCC 204508 / S288c) (Baker's yeast).